The chain runs to 132 residues: Small ribosomal subunit protein uS8 (132 aa).

It belongs to the universal ribosomal protein uS8 family. In terms of assembly, part of the 30S ribosomal subunit. Contacts proteins S5 and S12.

Functionally, one of the primary rRNA binding proteins, it binds directly to 16S rRNA central domain where it helps coordinate assembly of the platform of the 30S subunit. This Rickettsia akari (strain Hartford) protein is Small ribosomal subunit protein uS8.